The following is a 477-amino-acid chain: 3-isopropylmalate dehydratase large subunit (477 aa).

Residues C352, C413, and C416 each contribute to the [4Fe-4S] cluster site.

It belongs to the aconitase/IPM isomerase family. LeuC type 1 subfamily. In terms of assembly, heterodimer of LeuC and LeuD. It depends on [4Fe-4S] cluster as a cofactor.

The enzyme catalyses (2R,3S)-3-isopropylmalate = (2S)-2-isopropylmalate. The protein operates within amino-acid biosynthesis; L-leucine biosynthesis; L-leucine from 3-methyl-2-oxobutanoate: step 2/4. Catalyzes the isomerization between 2-isopropylmalate and 3-isopropylmalate, via the formation of 2-isopropylmaleate. The polypeptide is 3-isopropylmalate dehydratase large subunit (Pseudomonas entomophila (strain L48)).